The following is a 1001-amino-acid chain: X-linked retinitis pigmentosa GTPase regulator (1001 aa).

6 RCC1 repeats span residues 54 to 105, 106 to 158, 159 to 208, 209 to 261, 262 to 313, and 314 to 367; these read NKLY…STDT, GGVY…LTED, GKLF…VTMD, GELY…LTEK, VVYA…MTEL, and GLLY…FATP. Positions 404-428 are disordered; the sequence is SLSARLRRRERERPPCSASMVGTLP. The residue at position 518 (serine 518) is a Phosphoserine. Composition is skewed to basic and acidic residues over residues 631-641 and 659-671; these read KKIRESEENSK and EDNK…RRSS. 4 disordered regions span residues 631–738, 794–869, 902–925, and 962–1001; these read KKIR…WYDR, NLEF…EGSE, PKGH…DPTS, and GDQI…CTIL. 2 stretches are compositionally biased toward acidic residues: residues 679 to 691 and 717 to 731; these read SETE…DSYM and EKDE…EVET. 3 stretches are compositionally biased toward basic and acidic residues: residues 794-818, 847-857, and 902-911; these read NLEF…EKEA, EERKEGEKEIV, and PKGHMYDRVK. Over residues 976-1001 the composition is skewed to polar residues; sequence QNHMGQNLQDSTTPNMEGKSKSCTIL. Cysteine 998 is modified (cysteine methyl ester). Residue cysteine 998 is the site of S-geranylgeranyl cysteine attachment. The propeptide at 999–1001 is removed in mature form; that stretch reads TIL.

Interacts with SPATA7. Interacts with PDE6D. Interacts with RPGRIP1 and RPGRIP1L; PDE6D, RPGRIP1 and RPGRIP1L may compete for the same binding sites. Interacts with NPM1. Interacts with PDE6D. Isoform 5 interacts (via N-terminus) with SMC1A and SMC3. Isoform 5 interacts with CEP290. Interacts with WHRN. Interacts with RAB37 and RAB8A (in GDP-bound forms); functions as GEF for RAB37 and RAB8A. In terms of processing, prenylated. In terms of tissue distribution, expressed in the retina (at protein level). Located mainly in the connecting cilia between the outer segment and inner segment and also observed in the outer plexiform layer, inner plexiform layer, and ganglion cell layer of the retinas. Isoform 1: Expressed in the retina (at protein level). Isoform 5: Expressed in the retina (at protein level). Expressed in the brain. Expressed in the testis (at protein level). Expressed in kidney (at protein level).

It localises to the golgi apparatus. It is found in the cytoplasm. The protein localises to the cytoskeleton. The protein resides in the microtubule organizing center. Its subcellular location is the centrosome. It localises to the cell projection. It is found in the cilium. The protein localises to the cilium basal body. The protein resides in the cilium axoneme. Its subcellular location is the flagellum axoneme. Acts as a guanine-nucleotide releasing factor (GEF) for RAB8A and RAB37 by promoting the conversion of inactive RAB-GDP to the active form RAB-GTP. GEF activity towards RAB8A may facilitate ciliary trafficking by modulating ciliary intracellular localization of RAB8A. GEF activity towards RAB37 maintains autophagic homeostasis and retinal function. Involved in photoreceptor integrity. May control cilia formation by regulating actin stress filaments and cell contractility. May be involved in microtubule organization and regulation of transport in primary cilia. Its function is as follows. Isoform 5 may play a critical role in spermatogenesis and in intraflagellar transport processes. In Mus musculus (Mouse), this protein is X-linked retinitis pigmentosa GTPase regulator.